We begin with the raw amino-acid sequence, 208 residues long: Type 3 secretion system stator protein (208 aa).

Belongs to the SctL stator family. The core secretion machinery of the T3SS is composed of approximately 20 different proteins, including cytoplasmic components, a base, an export apparatus and a needle. This subunit is part of the cytosolic complex.

The protein resides in the cytoplasm. Functionally, component of the type III secretion system (T3SS), also called injectisome, which is used to inject bacterial effector proteins into eukaryotic host cells. Acts as a regulator of the HrcN/SctN ATPase activity. The protein is Type 3 secretion system stator protein of Sinorhizobium fredii (strain NBRC 101917 / NGR234).